Consider the following 500-residue polypeptide: 4-aminobutyrate aminotransferase, mitochondrial (500 aa).

The N-terminal 27 residues, 1-27 (MAFLLTTRRLVCSSQKNLHLFTPGSRY), are a transit peptide targeting the mitochondrion. Residue cysteine 163 coordinates [2Fe-2S] cluster. 164-165 (GS) is a binding site for pyridoxal 5'-phosphate. Cysteine 166 is a [2Fe-2S] cluster binding site. Arginine 220 lines the substrate pocket. At lysine 231 the chain carries N6-succinyllysine. The residue at position 252 (lysine 252) is an N6-acetyllysine; alternate. At lysine 252 the chain carries N6-succinyllysine; alternate. Lysine 279 and lysine 318 each carry N6-acetyllysine. An N6-(pyridoxal phosphate)lysine modification is found at lysine 357. Threonine 381 contributes to the pyridoxal 5'-phosphate binding site. At lysine 413 the chain carries N6-acetyllysine; alternate. At lysine 413 the chain carries N6-succinyllysine; alternate. N6-acetyllysine occurs at positions 452 and 470.

It belongs to the class-III pyridoxal-phosphate-dependent aminotransferase family. Homodimer; disulfide-linked. Requires pyridoxal 5'-phosphate as cofactor. [2Fe-2S] cluster serves as cofactor.

It is found in the mitochondrion matrix. The enzyme catalyses 4-aminobutanoate + 2-oxoglutarate = succinate semialdehyde + L-glutamate. The catalysed reaction is (S)-3-amino-2-methylpropanoate + 2-oxoglutarate = 2-methyl-3-oxopropanoate + L-glutamate. Its function is as follows. Catalyzes the conversion of gamma-aminobutyrate and L-beta-aminoisobutyrate to succinate semialdehyde and methylmalonate semialdehyde, respectively. Can also convert delta-aminovalerate and beta-alanine. This chain is 4-aminobutyrate aminotransferase, mitochondrial, found in Rattus norvegicus (Rat).